The sequence spans 890 residues: Alanine--tRNA ligase (890 aa).

Zn(2+) contacts are provided by histidine 573, histidine 577, cysteine 675, and histidine 679.

It belongs to the class-II aminoacyl-tRNA synthetase family. Zn(2+) serves as cofactor.

The protein localises to the cytoplasm. It carries out the reaction tRNA(Ala) + L-alanine + ATP = L-alanyl-tRNA(Ala) + AMP + diphosphate. Functionally, catalyzes the attachment of alanine to tRNA(Ala) in a two-step reaction: alanine is first activated by ATP to form Ala-AMP and then transferred to the acceptor end of tRNA(Ala). Also edits incorrectly charged Ser-tRNA(Ala) and Gly-tRNA(Ala) via its editing domain. The chain is Alanine--tRNA ligase from Streptomyces avermitilis (strain ATCC 31267 / DSM 46492 / JCM 5070 / NBRC 14893 / NCIMB 12804 / NRRL 8165 / MA-4680).